The chain runs to 578 residues: Arginine--tRNA ligase (578 aa).

The 'HIGH' region motif lies at 127–137 (PNLAKEMHVGH).

Belongs to the class-I aminoacyl-tRNA synthetase family. In terms of assembly, monomer.

It localises to the cytoplasm. It catalyses the reaction tRNA(Arg) + L-arginine + ATP = L-arginyl-tRNA(Arg) + AMP + diphosphate. The polypeptide is Arginine--tRNA ligase (Pseudomonas fluorescens (strain ATCC BAA-477 / NRRL B-23932 / Pf-5)).